Here is a 241-residue protein sequence, read N- to C-terminus: Probable transcriptional regulatory protein CV_3123 (241 aa).

The protein belongs to the TACO1 family.

It is found in the cytoplasm. The sequence is that of Probable transcriptional regulatory protein CV_3123 from Chromobacterium violaceum (strain ATCC 12472 / DSM 30191 / JCM 1249 / CCUG 213 / NBRC 12614 / NCIMB 9131 / NCTC 9757 / MK).